Reading from the N-terminus, the 421-residue chain is Zinc finger protein Pegasus (421 aa).

Residues 35 to 55 (GDKEAETLQGAGTEGDQNGLD) are disordered. 3 consecutive C2H2-type zinc fingers follow at residues 82 to 104 (LKCR…IRIH), 110 to 132 (HRCH…MRSH), and 138 to 161 (YKCE…RRKH). The segment covering 229 to 238 (SMTKSSQTSG) has biased composition (polar residues). 2 disordered regions span residues 229–249 (SMTK…LMVD) and 292–358 (QPAT…PTLP). A compositionally biased stretch (low complexity) spans 292-313 (QPATPAVVSSVSASIAQSSSPT). Polar residues predominate over residues 339 to 351 (HTSTPSISNSQPS). 2 consecutive C2H2-type zinc fingers follow at residues 366 to 388 (HHCQ…MGCH) and 394 to 418 (FQCN…RGQH).

This sequence belongs to the Ikaros C2H2-type zinc-finger protein family. As to quaternary structure, probably self-associates.

The protein localises to the nucleus. Transcriptional repressor that binds the core 5'GNNTGTNG-3' DNA consensus sequence. The sequence is that of Zinc finger protein Pegasus (IKZF5) from Gallus gallus (Chicken).